A 568-amino-acid chain; its full sequence is Proline--tRNA ligase (568 aa).

It belongs to the class-II aminoacyl-tRNA synthetase family. ProS type 1 subfamily. Homodimer.

It is found in the cytoplasm. It catalyses the reaction tRNA(Pro) + L-proline + ATP = L-prolyl-tRNA(Pro) + AMP + diphosphate. In terms of biological role, catalyzes the attachment of proline to tRNA(Pro) in a two-step reaction: proline is first activated by ATP to form Pro-AMP and then transferred to the acceptor end of tRNA(Pro). As ProRS can inadvertently accommodate and process non-cognate amino acids such as alanine and cysteine, to avoid such errors it has two additional distinct editing activities against alanine. One activity is designated as 'pretransfer' editing and involves the tRNA(Pro)-independent hydrolysis of activated Ala-AMP. The other activity is designated 'posttransfer' editing and involves deacylation of mischarged Ala-tRNA(Pro). The misacylated Cys-tRNA(Pro) is not edited by ProRS. This is Proline--tRNA ligase from Campylobacter jejuni subsp. jejuni serotype O:6 (strain 81116 / NCTC 11828).